Here is a 215-residue protein sequence, read N- to C-terminus: UPF0502 protein Ping_1905 (215 aa).

This sequence belongs to the UPF0502 family.

This chain is UPF0502 protein Ping_1905, found in Psychromonas ingrahamii (strain DSM 17664 / CCUG 51855 / 37).